We begin with the raw amino-acid sequence, 343 residues long: Phospholipid phosphatase-related protein type 2 (343 aa).

The next 3 membrane-spanning stretches (helical) occupy residues 12 to 32, 72 to 92, and 129 to 149; these read FSIIPCFVFVESVLLGIVVLL, ALIYALVTAGPTLTILLGELA, and FLGVYSFGLFTTTIFANAGQV. Asparagine 165 carries an N-linked (GlcNAc...) asparagine glycan. Helical transmembrane passes span 210 to 230, 239 to 259, and 266 to 286; these read AALCAYAVTYTAMYVTLVFRV, SLCLALLCPAFLVGVVRVAEY, and VLAGFLTGAAIATFLVTCVVH. Residues 291-343 are disordered; the sequence is RPHSGRRLSPWEDLSQAPTMDSPLEKNPRPAGRIRHRHGSPHPSRRTVPAVAT. A phosphoserine mark is found at serine 299 and serine 312. A compositionally biased stretch (basic residues) spans 322 to 335; sequence GRIRHRHGSPHPSR.

Belongs to the PA-phosphatase related phosphoesterase family.

The protein resides in the membrane. This chain is Phospholipid phosphatase-related protein type 2, found in Mus musculus (Mouse).